The primary structure comprises 396 residues: Nucleolar protein 12 (396 aa).

The segment at 43–104 (TDKDADGDEK…GKESKKSTKE (62 aa)) is disordered. Positions 47–58 (ADGDEKMEDAAS) are enriched in acidic residues. The span at 64–73 (KKPSKKKLAK) shows a compositional bias: basic residues. Over residues 87 to 104 (EPEKLVEEGKESKKSTKE) the composition is skewed to basic and acidic residues. RRM domains follow at residues 112-220 (RTIF…SITH) and 228-312 (RSVF…RCKN). The disordered stretch occupies residues 361 to 396 (TKDDSKPVLKKGKKERSKTGRVTKRSQAFKKSQQKK). The span at 368-396 (VLKKGKKERSKTGRVTKRSQAFKKSQQKK) shows a compositional bias: basic residues.

This sequence belongs to the RRM RBM34 family.

Its subcellular location is the nucleus. The protein localises to the nucleolus. Functionally, involved in pre-25S rRNA processing. The protein is Nucleolar protein 12 (NOP12) of Candida glabrata (strain ATCC 2001 / BCRC 20586 / JCM 3761 / NBRC 0622 / NRRL Y-65 / CBS 138) (Yeast).